The sequence spans 218 residues: Glutathione S-transferase Mu 7 (218 aa).

The GST N-terminal domain maps to 1–88 (MPMTLGYWDI…YLGRKHNLCG (88 aa)). Residues 7-8 (YW), 46-50 (WLNEK), 59-60 (NL), and 72-73 (QS) each bind glutathione. In terms of domain architecture, GST C-terminal spans 90 to 208 (TEEERIRVDI…KTSRFLPRPM (119 aa)). Tyr116 is a substrate binding site.

The protein belongs to the GST superfamily. Mu family. As to quaternary structure, homodimer.

It is found in the cytoplasm. It catalyses the reaction RX + glutathione = an S-substituted glutathione + a halide anion + H(+). In terms of biological role, conjugation of reduced glutathione to a wide number of exogenous and endogenous hydrophobic electrophiles. This chain is Glutathione S-transferase Mu 7 (Gstm7), found in Mus musculus (Mouse).